The sequence spans 309 residues: uncharacterized protein (309 aa).

The 238-residue stretch at 17-254 folds into the Radical SAM core domain; sequence RYGQKVHKLT…AGEMIRHTPP (238 aa). Residues cysteine 33, cysteine 45, and cysteine 48 each contribute to the [4Fe-4S] cluster site.

Belongs to the radical SAM superfamily. It depends on [4Fe-4S] cluster as a cofactor.

This is an uncharacterized protein from Escherichia coli O157:H7.